The following is a 497-amino-acid chain: MTPPENKNLVDENKELIQEVLKAYPEKSRKKREKHLNVHEENKSDCGVKSNIKSVPGVMTARGCAYAGSKGVVWGPIKDMIHISHGPVGCGYWSWSGRRNYYVGVTGINSFGTMHFTSDFQERDIVFGGDKKLTKLIEELDVLFPLNRGVSIQSECPIGLIGDDIEAVAKKTSKQIGKPVVPLRCEGFRGVSQSLGHHIANDAIRDWIFPEYDKLKKENRLDFEPSPYDVALIGDYNIGGDAWASRMLLEEMGLRVVAQWSGDGTLNELIQGPAAKLVLIHCYRSMNYICRSLEEQYGMPWMEFNFFGPTKIAASLREIAAKFDSKIQENAEKVIAKYTPVMNAVLDKYRPRLEGNTVMLYVGGLRPRHVVPAFEDLGIKVVGTGYEFAHNDDYKRTTHYIDNATIIYDDVTAYEFEEFVKAKKPDLIASGIKEKYVFQKMGLPFRQMHSWDYSGPYHGYDGFAIFARDMDLALNSPTWSLIGAPWKKAAAKAKAAA.

[8Fe-7S] cluster-binding residues include Cys-64, Cys-90, and Cys-156. The [7Fe-Mo-9S-C-homocitryl] cluster site is built by Cys-282 and His-449.

The protein belongs to the NifD/NifK/NifE/NifN family. As to quaternary structure, tetramer of two alpha and two beta chains. Forms complex with the iron protein (nitrogenase component 2). The cofactor is [8Fe-7S] cluster. It depends on [7Fe-Mo-9S-C-homocitryl] cluster as a cofactor.

It catalyses the reaction N2 + 8 reduced [2Fe-2S]-[ferredoxin] + 16 ATP + 16 H2O = H2 + 8 oxidized [2Fe-2S]-[ferredoxin] + 2 NH4(+) + 16 ADP + 16 phosphate + 6 H(+). This molybdenum-iron protein is part of the nitrogenase complex that catalyzes the key enzymatic reactions in nitrogen fixation. The sequence is that of Nitrogenase molybdenum-iron protein alpha chain (nifD) from Nostoc sp. (strain PCC 7120 / SAG 25.82 / UTEX 2576).